A 420-amino-acid chain; its full sequence is Histidine--tRNA ligase (420 aa).

This sequence belongs to the class-II aminoacyl-tRNA synthetase family. Homodimer.

The protein resides in the cytoplasm. It carries out the reaction tRNA(His) + L-histidine + ATP = L-histidyl-tRNA(His) + AMP + diphosphate + H(+). The protein is Histidine--tRNA ligase (hisS) of Thermotoga maritima (strain ATCC 43589 / DSM 3109 / JCM 10099 / NBRC 100826 / MSB8).